Here is a 656-residue protein sequence, read N- to C-terminus: Solute carrier family 5 member 4A (656 aa).

At 1–28 (MASTASVSTSTASSELSSLSNNINNAAD) the chain is on the cytoplasmic side. Residues 29–47 (ISVIVIYFVVVMAVGVWAM) traverse the membrane as a helical segment. Topologically, residues 48 to 64 (LKTNRSTVGGFFLAGRS) are extracellular. A helical transmembrane segment spans residues 65–85 (MTWWPMGASLFASNIGSGHFV). Over 86–105 (GLAGTGAASGIAVTAFESHS) the chain is Cytoplasmic. A helical transmembrane segment spans residues 106–126 (FALLLVLGWIFVPIYIKAGVM). The Extracellular segment spans residues 127–171 (TMPEYLKKRFGGKRLQIYLSILFLFICVILTISADIFSGAIFIKL). Residues 172-191 (ALGLNLYLAILILLAITAIF) traverse the membrane as a helical segment. Topologically, residues 192 to 208 (TITGGLASVIYTDTVQA) are cytoplasmic. A helical transmembrane segment spans residues 209–229 (VIMLVGSFILMVFAFVEVGGY). The Extracellular portion of the chain corresponds to 230–270 (ESFTEKFMNAIPSVVEGDNLTINSRCYTPQPDSFHIFRDPV). Residue Asn248 is glycosylated (N-linked (GlcNAc...) asparagine). A helical transmembrane segment spans residues 271–291 (TGDIPWPGTAFGMPITALWYW). Residues 292 to 314 (CINQVIVQRCLCGKNLSHVKAAC) are Cytoplasmic-facing. Residues 315–334 (ILCGYLKLLPLFFMVMPGMI) traverse the membrane as a helical segment. The Extracellular segment spans residues 335 to 423 (SRILYTDMVA…RKKASERELL (89 aa)). Residues 424-443 (IAGRLFVSVLIVTSILWVPI) traverse the membrane as a helical segment. Topologically, residues 444–455 (VEVSQGGQLVHY) are cytoplasmic. The chain crosses the membrane as a helical span at residues 456–476 (TEAISSYLGPPIAAVFLVAVF). Residues 477–526 (CKRANEQGAFWGLMVGLVMGLIRMIAEFSYGTGSCLAPSSCPKIICGVHY) lie on the Extracellular side of the membrane. A helical membrane pass occupies residues 527–547 (LYFAIILFFVCILVILGVSYL). Residues 548–634 (TKPIPDVHLH…TDTTEKPFWR (87 aa)) are Cytoplasmic-facing. Residues 574-593 (DAEDKEENGADDRTEEDQTE) form a disordered region. Residues 635–655 (TVMNVNVILLLAVAAFFYGYF) form a helical membrane-spanning segment.

The protein belongs to the sodium:solute symporter (SSF) (TC 2.A.21) family. As to expression, expressed in small intestine. Expressed in kidney.

The protein resides in the cell membrane. Its activity is regulated as follows. Not inhibited by phlorizin. Its function is as follows. Does not function as sodium/D-glucose symporter. Generates D-glucose-induced depolarization in a pH-dependent manner, with activity in acidic conditions (pH 5) but not neutral conditions. The protein is Solute carrier family 5 member 4A of Mus musculus (Mouse).